The sequence spans 227 residues: MAHAAQVGLQDATSPIMEELIIFHDHALMIIFLICFLVLYALFLTLTTKLTNTSISDAQEMETVWTILPAIILVLIALPSLRILYMTDEVNDPSFTIKSIGHQWYWTYEYTDYGGLIFNSYMLPPLFLEPGDLRLLDVDNRVVLPVEAPVRMMITSQDVLHSWAVPTLGLKTDAIPGRLNQTTFTATRPGVYYGQCSEICGANHSFMPIVLELIPLKIFEMGPVFTL.

The Mitochondrial intermembrane segment spans residues 1–14 (MAHAAQVGLQDATS). A helical membrane pass occupies residues 15–45 (PIMEELIIFHDHALMIIFLICFLVLYALFLT). Residues 46–59 (LTTKLTNTSISDAQ) lie on the Mitochondrial matrix side of the membrane. A helical membrane pass occupies residues 60 to 87 (EMETVWTILPAIILVLIALPSLRILYMT). Topologically, residues 88 to 227 (DEVNDPSFTI…IFEMGPVFTL (140 aa)) are mitochondrial intermembrane. Cu cation contacts are provided by histidine 161, cysteine 196, glutamate 198, cysteine 200, histidine 204, and methionine 207. Glutamate 198 is a binding site for Mg(2+).

This sequence belongs to the cytochrome c oxidase subunit 2 family. In terms of assembly, component of the cytochrome c oxidase (complex IV, CIV), a multisubunit enzyme composed of 14 subunits. The complex is composed of a catalytic core of 3 subunits MT-CO1, MT-CO2 and MT-CO3, encoded in the mitochondrial DNA, and 11 supernumerary subunits COX4I, COX5A, COX5B, COX6A, COX6B, COX6C, COX7A, COX7B, COX7C, COX8 and NDUFA4, which are encoded in the nuclear genome. The complex exists as a monomer or a dimer and forms supercomplexes (SCs) in the inner mitochondrial membrane with NADH-ubiquinone oxidoreductase (complex I, CI) and ubiquinol-cytochrome c oxidoreductase (cytochrome b-c1 complex, complex III, CIII), resulting in different assemblies (supercomplex SCI(1)III(2)IV(1) and megacomplex MCI(2)III(2)IV(2)). Found in a complex with TMEM177, COA6, COX18, COX20, SCO1 and SCO2. Interacts with TMEM177 in a COX20-dependent manner. Interacts with COX20. Interacts with COX16. Requires Cu cation as cofactor.

It localises to the mitochondrion inner membrane. It catalyses the reaction 4 Fe(II)-[cytochrome c] + O2 + 8 H(+)(in) = 4 Fe(III)-[cytochrome c] + 2 H2O + 4 H(+)(out). Functionally, component of the cytochrome c oxidase, the last enzyme in the mitochondrial electron transport chain which drives oxidative phosphorylation. The respiratory chain contains 3 multisubunit complexes succinate dehydrogenase (complex II, CII), ubiquinol-cytochrome c oxidoreductase (cytochrome b-c1 complex, complex III, CIII) and cytochrome c oxidase (complex IV, CIV), that cooperate to transfer electrons derived from NADH and succinate to molecular oxygen, creating an electrochemical gradient over the inner membrane that drives transmembrane transport and the ATP synthase. Cytochrome c oxidase is the component of the respiratory chain that catalyzes the reduction of oxygen to water. Electrons originating from reduced cytochrome c in the intermembrane space (IMS) are transferred via the dinuclear copper A center (CU(A)) of subunit 2 and heme A of subunit 1 to the active site in subunit 1, a binuclear center (BNC) formed by heme A3 and copper B (CU(B)). The BNC reduces molecular oxygen to 2 water molecules using 4 electrons from cytochrome c in the IMS and 4 protons from the mitochondrial matrix. The polypeptide is Cytochrome c oxidase subunit 2 (MT-CO2) (Pan troglodytes (Chimpanzee)).